Reading from the N-terminus, the 592-residue chain is Inactive metallocarboxypeptidase ecm14 (592 aa).

A signal peptide spans 1–22 (MYRQDHVFVVLCAVLLAGQVTA). Residues 23–175 (VPAGTGINPH…AIYESRYPTR (153 aa)) constitute a propeptide that is removed on maturation. Residues 203 to 524 (HYQPFNVILQ…NSVLVLGHFL (322 aa)) form the Peptidase M14 domain. Positions 267 and 270 each coordinate Zn(2+). Substrate contacts are provided by residues 267 to 270 (HARE), arginine 325, and 342 to 343 (DR). A disulfide bridge connects residues cysteine 336 and cysteine 359. N-linked (GlcNAc...) asparagine glycosylation occurs at asparagine 383. A Zn(2+)-binding site is contributed by histidine 399. 400–401 (SY) is a substrate binding site. Residue asparagine 548 is glycosylated (N-linked (GlcNAc...) asparagine).

The protein belongs to the peptidase M14 family. It depends on Zn(2+) as a cofactor.

It is found in the vacuole. Its subcellular location is the secreted. In terms of biological role, inactive carboxypeptidase that may play a role in cell wall organization and biogenesis. This is Inactive metallocarboxypeptidase ecm14 (ecm14) from Talaromyces stipitatus (strain ATCC 10500 / CBS 375.48 / QM 6759 / NRRL 1006) (Penicillium stipitatum).